A 367-amino-acid polypeptide reads, in one-letter code: C-C chemokine receptor type 9 (367 aa).

Over 1-46 (MVPTEATSLILNPSDDYGYDGTPPMEYDTNLTDYFCEKSHVRQFAG) the chain is Extracellular. N30 is a glycosylation site (N-linked (GlcNAc...) asparagine). Disulfide bonds link C36–C287 and C117–C196. Residues 47-72 (HFLPPLYWLVFIVGAVGNSLVILVYW) traverse the membrane as a helical segment. At 73 to 83 (YCTRVKTMTDM) the chain is on the cytoplasmic side. The helical transmembrane segment at 84-107 (FLLNLAIADLLFLTTLPFWAIAAA) threads the bilayer. Residues 108–118 (DQWKFQTFMCK) are Extracellular-facing. Residues 119-148 (VVNSMYKMNFYSCVLLIMCISVDRYIAIAQ) traverse the membrane as a helical segment. Topologically, residues 149–157 (AMRAQMWRQ) are cytoplasmic. Residues 158-183 (KRLLYSKMVCFTIWVMAAALCLPELL) form a helical membrane-spanning segment. Over 184–206 (YSQVKEEHGTAICTVVYSSNEST) the chain is Extracellular. N203 carries an N-linked (GlcNAc...) asparagine glycan. A helical transmembrane segment spans residues 207–241 (KLKSAVLTLKVTLGFFLPFVVMACCYAIIIHTLIR). The Cytoplasmic portion of the chain corresponds to 242–246 (AKKSS). The chain crosses the membrane as a helical span at residues 247–281 (KHKALKVTITVLTVFVLSQFPHNCVLLVQTIDAYA). At 282 to 288 (TFISSCA) the chain is on the extracellular side. Residues 289 to 319 (LSIKIDICFQVTQTVAFFHSCLNPVLYVFVG) form a helical membrane-spanning segment. Topologically, residues 320–367 (ERFRRDLVKTLKNLGCISQAQWVSFTRREGSLKLSSMLLETTSGALSF) are cytoplasmic.

The protein belongs to the G-protein coupled receptor 1 family.

The protein resides in the cell membrane. Its function is as follows. Receptor for chemokine SCYA25/TECK. Subsequently transduces a signal by increasing the intracellular calcium ions level. This is C-C chemokine receptor type 9 (CCR9) from Ovis aries (Sheep).